The primary structure comprises 362 residues: Histidinol-phosphate aminotransferase (362 aa).

Residue K218 is modified to N6-(pyridoxal phosphate)lysine.

This sequence belongs to the class-II pyridoxal-phosphate-dependent aminotransferase family. Histidinol-phosphate aminotransferase subfamily. Homodimer. It depends on pyridoxal 5'-phosphate as a cofactor.

The enzyme catalyses L-histidinol phosphate + 2-oxoglutarate = 3-(imidazol-4-yl)-2-oxopropyl phosphate + L-glutamate. The protein operates within amino-acid biosynthesis; L-histidine biosynthesis; L-histidine from 5-phospho-alpha-D-ribose 1-diphosphate: step 7/9. This Ruegeria sp. (strain TM1040) (Silicibacter sp.) protein is Histidinol-phosphate aminotransferase.